Here is a 577-residue protein sequence, read N- to C-terminus: Cytochrome P450 714D1 (577 aa).

At 1–3 the chain is on the lumenal side; that stretch reads MES. The helical; Signal-anchor for type III membrane protein transmembrane segment at 4 to 24 threads the bilayer; sequence FFVFFTAAALPVVVAAAVIAG. Residues 25–577 are Cytoplasmic-facing; sequence LCITAAWLAR…STAPVHSSHN (553 aa). Residues 315 to 343 form a disordered region; sequence REHGGKAAPPSPPERDFLGSIIENSGGQP. Position 504 (Cys-504) interacts with heme.

Belongs to the cytochrome P450 family. It depends on heme as a cofactor. Expressed in rapidly elongating or dividing tissues, including the shoot apical meristem, the intercalary meristem and elongating zones of internodes, and panicle but not in young seedlings, roots and leaves. During the heading stage, the highest expression is detected in the flowering spikelets, anthers, the divisional zone and the node of the uppermost internode.

It localises to the endoplasmic reticulum membrane. Catalyzes the 16alpha,17-epoxidation on non-13-hydroxylated gibberellins (GAs), including GA4, GA9, and GA12. No activity with GA1, GA20, GA53 or ent-kaurenoic acid. Reduces the biological activity of GAs. The protein is Cytochrome P450 714D1 (CYP714D1) of Oryza sativa subsp. japonica (Rice).